Reading from the N-terminus, the 394-residue chain is MDALVEDDICILNHEKAHKRDTVTPVSIYSGDESVASHFALVTAYEDIKKRLKDSEKENSLLKKRIRFLEEKLIARFDEETSSVGREQVNKAYHAYREVCIDRDNLKSKLDKMNKDNSESLKVLNEQLQSKEVELLQLRTEVETQQVMRNLNTPSSNWEVEKLSCDLKIHGLEQELELMRKECSDLKIELRKAKQTDPYQEDNLKSRDLQKLSISSDNMQHAYWELKREMSNLHLVTQVQAELLRKLKTSTAIKKACAPVGCSEDLGRDSTKLHLMNFTATYTRHPPLSPNGKALCHAASSPLPGDIKVLSEKAVLQSWTDNERSIPNDGTCFQEHSSYGRNSLSLEDNSWVFPSPPKSSETAFGETKSKTLPLPNLPPLHYLDQHNQNCLYKN.

The segment at 1 to 197 (MDALVEDDIC…IELRKAKQTD (197 aa)) is homodimerization. 2 coiled-coil regions span residues 40 to 76 (ALVTAYEDIKKRLKDSEKENSLLKKRIRFLEEKLIAR) and 102 to 196 (DRDN…AKQT). Positions 216–257 (SDNMQHAYWELKREMSNLHLVTQVQAELLRKLKTSTAIKKAC) are interaction with TBK1 and IKBKE. Phosphoserine is present on residues Ser-318 and Ser-355. A disordered region spans residues 355–379 (SPPKSSETAFGETKSKTLPLPNLPP).

In terms of assembly, homodimer. Interacts with IKBKE, TBK1 and TICAM1. Interacts with TAX1BP1. Interacts with CALCOCO2. Post-translationally, ubiquitinated via 'Lys-48'-linked polyubiquitination by TRIM38, leading to its degradation.

It localises to the cytoplasm. In terms of biological role, adapter protein which binds TBK1 and IKBKE playing a role in antiviral innate immunity. Activates serine/threonine-protein kinase TBK1 and facilitates its oligomerization. Enhances the phosphorylation of NF-kappa-B p65 subunit RELA by TBK1. Promotes TBK1-induced as well as TNF-alpha or PMA-induced activation of NF-kappa-B. Participates in IFNB promoter activation via TICAM1. The chain is 5-azacytidine-induced protein 2 (AZI2) from Macaca fascicularis (Crab-eating macaque).